The following is a 376-amino-acid chain: Succinate--CoA ligase [ADP-forming] subunit beta (376 aa).

Positions 9–234 constitute an ATP-grasp domain; sequence KAIAKKYGIP…ERELSELEKE (226 aa). ATP is bound by residues Lys45, 52–54, Glu91, Glu94, and Glu99; that span reads GRG. Residues Asn191 and Asp204 each coordinate Mg(2+). Substrate-binding positions include Asn254 and 311 to 313; that span reads GIT.

This sequence belongs to the succinate/malate CoA ligase beta subunit family. Heterotetramer of two alpha and two beta subunits. Mg(2+) serves as cofactor.

The catalysed reaction is succinate + ATP + CoA = succinyl-CoA + ADP + phosphate. It catalyses the reaction GTP + succinate + CoA = succinyl-CoA + GDP + phosphate. It participates in carbohydrate metabolism; tricarboxylic acid cycle; succinate from succinyl-CoA (ligase route): step 1/1. Its function is as follows. Succinyl-CoA synthetase functions in the citric acid cycle (TCA), coupling the hydrolysis of succinyl-CoA to the synthesis of either ATP or GTP and thus represents the only step of substrate-level phosphorylation in the TCA. The beta subunit provides nucleotide specificity of the enzyme and binds the substrate succinate, while the binding sites for coenzyme A and phosphate are found in the alpha subunit. The protein is Succinate--CoA ligase [ADP-forming] subunit beta of Ignicoccus hospitalis (strain KIN4/I / DSM 18386 / JCM 14125).